The sequence spans 229 residues: GTP cyclohydrolase 1 (229 aa).

C116, H119, and C187 together coordinate Zn(2+).

Belongs to the GTP cyclohydrolase I family. Toroid-shaped homodecamer, composed of two pentamers of five dimers.

It carries out the reaction GTP + H2O = 7,8-dihydroneopterin 3'-triphosphate + formate + H(+). It functions in the pathway cofactor biosynthesis; 7,8-dihydroneopterin triphosphate biosynthesis; 7,8-dihydroneopterin triphosphate from GTP: step 1/1. The chain is GTP cyclohydrolase 1 from Synechococcus sp. (strain JA-3-3Ab) (Cyanobacteria bacterium Yellowstone A-Prime).